The primary structure comprises 92 residues: DNA-directed RNA polymerase subunit Rpo11 (92 aa).

It belongs to the archaeal Rpo11/eukaryotic RPB11/RPC19 RNA polymerase subunit family. As to quaternary structure, part of the RNA polymerase complex.

The protein resides in the cytoplasm. The catalysed reaction is RNA(n) + a ribonucleoside 5'-triphosphate = RNA(n+1) + diphosphate. In terms of biological role, DNA-dependent RNA polymerase (RNAP) catalyzes the transcription of DNA into RNA using the four ribonucleoside triphosphates as substrates. The chain is DNA-directed RNA polymerase subunit Rpo11 from Methanosarcina mazei (strain ATCC BAA-159 / DSM 3647 / Goe1 / Go1 / JCM 11833 / OCM 88) (Methanosarcina frisia).